The following is a 194-amino-acid chain: Cytochrome c oxidase assembly protein CtaG (194 aa).

Residues 1-12 are Cytoplasmic-facing; that stretch reads MALRGPAKTVAQ. A helical; Signal-anchor for type II membrane protein transmembrane segment spans residues 13-35; it reads TVSVVIFMGALAWASVPLYDWFC. Residues 36–194 lie on the Periplasmic side of the membrane; the sequence is RVTGFGGVTG…IEENSDTSLN (159 aa).

Belongs to the COX11/CtaG family.

Its subcellular location is the cell inner membrane. Its function is as follows. Exerts its effect at some terminal stage of cytochrome c oxidase synthesis, probably by being involved in the insertion of the copper B into subunit I. This is Cytochrome c oxidase assembly protein CtaG from Roseobacter denitrificans (strain ATCC 33942 / OCh 114) (Erythrobacter sp. (strain OCh 114)).